Consider the following 335-residue polypeptide: 5-formaminoimidazole-4-carboxamide-1-(beta)-D-ribofuranosyl 5'-monophosphate synthetase (335 aa).

The 5-amino-1-(5-phospho-beta-D-ribosyl)imidazole-4-carboxamide site is built by His21 and Ser86. In terms of domain architecture, ATP-grasp spans 107 to 315 (RELLRWEADQ…YFDKPMDMGE (209 aa)). Residues 137–189 (PTEV…VPAY) and Glu211 contribute to the ATP site. Residue Asn231 participates in 5-amino-1-(5-phospho-beta-D-ribosyl)imidazole-4-carboxamide binding. Residues Glu270 and Glu283 each contribute to the Mg(2+) site.

This sequence belongs to the phosphohexose mutase family. Requires Mg(2+) as cofactor. Mn(2+) serves as cofactor.

The enzyme catalyses 5-amino-1-(5-phospho-beta-D-ribosyl)imidazole-4-carboxamide + formate + ATP = 5-formamido-1-(5-phospho-D-ribosyl)imidazole-4-carboxamide + ADP + phosphate. Its pathway is purine metabolism; IMP biosynthesis via de novo pathway; 5-formamido-1-(5-phospho-D-ribosyl)imidazole-4-carboxamide from 5-amino-1-(5-phospho-D-ribosyl)imidazole-4-carboxamide (formate route): step 1/1. In terms of biological role, catalyzes the ATP- and formate-dependent formylation of 5-aminoimidazole-4-carboxamide-1-beta-d-ribofuranosyl 5'-monophosphate (AICAR) to 5-formaminoimidazole-4-carboxamide-1-beta-d-ribofuranosyl 5'-monophosphate (FAICAR) in the absence of folates. This chain is 5-formaminoimidazole-4-carboxamide-1-(beta)-D-ribofuranosyl 5'-monophosphate synthetase, found in Pyrobaculum arsenaticum (strain DSM 13514 / JCM 11321 / PZ6).